A 779-amino-acid polypeptide reads, in one-letter code: Cysteine-rich protein 2-binding protein (779 aa).

Residues 1–34 (MDSSIHLSGLLSRHDDDATRTSTSEGLEEGEVEG) are disordered. Ser-4 carries the phosphoserine modification. Lys-230 is modified (N6-acetyllysine). Disordered regions lie at residues 247-292 (SRNP…PVKF), 314-345 (LSSSDRTPLTSPSPSPSLDFSAPGTPASHSAT), and 360-457 (PPQA…GPRY). Positions 255 to 275 (MELKEKRSRTQEAKDIRRAQK) are enriched in basic and acidic residues. Ser-284 is modified (phosphoserine). Lys-291 is modified (N6-acetyllysine). Low complexity predominate over residues 314–334 (LSSSDRTPLTSPSPSPSLDFS). Composition is skewed to basic and acidic residues over residues 402-423 (RAPEQIKQEVDSEEEKPDRMDG) and 443-452 (KPPLEKDMKP). Ser-413 carries the phosphoserine modification. One can recognise an N-acetyltransferase domain in the interval 635-779 (LDYCYVRPNH…KHAFFLRLRR (145 aa)).

Interacts with the LIM 1 domain of CSRP2. Component of the ADA2A-containing complex (ATAC), composed of CSRP2BP, KAT2A, TADA2L, TADA3L, ZZ3, MBIP, WDR5, YEATS2, CCDC101 and DR1. In the complex, it probably interacts directly with KAT2A, MBIP and WDR5.

The protein localises to the nucleus. Its subcellular location is the cytoplasm. Functionally, component of the ATAC complex, a complex with histone acetyltransferase activity on histones H3 and H4. May function as a scaffold for the ATAC complex to promote ATAC complex stability. Has also weak histone acetyltransferase activity toward histone H4. Required for the normal progression through G1 and G2/M phases of the cell cycle. The protein is Cysteine-rich protein 2-binding protein of Mus musculus (Mouse).